Here is a 1242-residue protein sequence, read N- to C-terminus: DNA-directed RNA polymerase RPB2 homolog (1242 aa).

The C4-type zinc-finger motif lies at 1180-1201; that stretch reads CRNCGEPAIYNASHPIYKCMNC.

Belongs to the RNA polymerase beta chain family. In terms of assembly, part of the viral DNA-directed RNA polymerase that consists of 8 polII-like subunits (RPB1, RPB2, RPB3, RPB5, RPB6, RPB7, RPB9, RPB10), a capping enzyme and a termination factor.

The protein localises to the host cytoplasm. Its subcellular location is the virion. The enzyme catalyses RNA(n) + a ribonucleoside 5'-triphosphate = RNA(n+1) + diphosphate. Functionally, catalytic component of the DNA-directed RNA polymerase (RNAP) that catalyzes the transcription in the cytoplasm of viral DNA into RNA using the four ribonucleoside triphosphates as substrates. Forms the polymerase active center together with RPB1. Part of the core element with the central large cleft, the clamp element that moves to open and close the cleft and the jaws that are thought to grab the incoming DNA template. This African swine fever virus (isolate Tick/Malawi/Lil 20-1/1983) (ASFV) protein is DNA-directed RNA polymerase RPB2 homolog.